The sequence spans 250 residues: Flap endonuclease Xni (250 aa).

Residue D104 coordinates Mg(2+). The region spanning 160–249 (VQPQQLTDFW…LQGNLQQLRL (90 aa)) is the 5'-3' exonuclease domain. L171, A172, P180, V182, and I185 together coordinate K(+). Residues 184–189 (GIGPKS) form an interaction with DNA region.

It belongs to the Xni family. Requires Mg(2+) as cofactor. The cofactor is K(+).

Functionally, has flap endonuclease activity. During DNA replication, flap endonucleases cleave the 5'-overhanging flap structure that is generated by displacement synthesis when DNA polymerase encounters the 5'-end of a downstream Okazaki fragment. The sequence is that of Flap endonuclease Xni from Sodalis glossinidius (strain morsitans).